The primary structure comprises 139 residues: Small ribosomal subunit protein uS12 (139 aa).

A disordered region spans residues 1–55; the sequence is MPTINQLIRKGRKAKVKKSDSPALNKGYNSFKKVQTDLSSPQKRGVCTRVGTMTP. Polar residues predominate over residues 32 to 42; sequence KKVQTDLSSPQ.

The protein belongs to the universal ribosomal protein uS12 family. In terms of assembly, part of the 30S ribosomal subunit. Contacts proteins S8 and S17. May interact with IF1 in the 30S initiation complex.

With S4 and S5 plays an important role in translational accuracy. Functionally, interacts with and stabilizes bases of the 16S rRNA that are involved in tRNA selection in the A site and with the mRNA backbone. Located at the interface of the 30S and 50S subunits, it traverses the body of the 30S subunit contacting proteins on the other side and probably holding the rRNA structure together. The combined cluster of proteins S8, S12 and S17 appears to hold together the shoulder and platform of the 30S subunit. This is Small ribosomal subunit protein uS12 from Halalkalibacterium halodurans (strain ATCC BAA-125 / DSM 18197 / FERM 7344 / JCM 9153 / C-125) (Bacillus halodurans).